The following is a 165-amino-acid chain: Transcription factor zip-10 (165 aa).

Positions 53 to 71 (ASLGTSTTSSSRCSSTESS) are enriched in low complexity. A disordered region spans residues 53 to 99 (ASLGTSTTSSSRCSSTESSAAPGKIRRGRPQQEIADGQDAHSQKKRH). The stretch at 104–150 (ARQYRAQMRQKVENVKSLHDEKEQLELEVKALRQAVSGLQQENAQKD) forms a coiled coil.

It is found in the nucleus. In terms of biological role, transcription factor that regulates the expression of genes in response to changes in temperature. In particular, binds to the promoter region of genes such as asp-17 in response to severe cold to warm temperature transitions to promote gene expression. Promotes stress-induced death, particularly in older animals, following cold shock followed by warming and this may have evolved as a form of kin survival under thermal stress conditions, favoring the survival of younger animals. This Caenorhabditis elegans protein is Transcription factor zip-10.